The following is a 157-amino-acid chain: MFLRQEDFAAVVRTTPLISLDFIVENGQGEILLGQRLNRPAQGYWFVPGGRVCKDETLEAAFARLTQAELGVRLPLAAGTFYGVWQHFYDDNFSSEDFSTHYIVLGFRLRVAESDLRLPDAQHGSYRWLTPEQLLAGDNVHENSRAYFSPDAPAVGL.

Substrate-binding positions include 2-3, F8, and R36; that span reads FL. Residues 3-153 enclose the Nudix hydrolase domain; that stretch reads LRQEDFAAVV…SRAYFSPDAP (151 aa). Residues G49, E69, and Q122 each coordinate Mg(2+). Positions 50 to 71 match the Nudix box motif; it reads GRVCKDETLEAAFARLTQAELG.

Belongs to the Nudix hydrolase family. Homodimer. The cofactor is Mg(2+).

It carries out the reaction GDP-alpha-D-mannose + H2O = D-mannose + GDP + H(+). Hydrolyzes GDP-mannose. In Salmonella typhi, this protein is GDP-mannose mannosyl hydrolase.